The following is a 459-amino-acid chain: Flagellar radial spoke protein 6 (459 aa).

The residue at position 267 (Arg267) is an Asymmetric dimethylarginine. The tract at residues 309-330 is disordered; the sequence is QGRTVTHKRDPPDEEEEPEKNF. Arg398 carries the asymmetric dimethylarginine modification. The interval 418 to 459 is disordered; it reads CPPPPPVPQWGAPAAGVEGGQQLLLECNDLPPKPAPPEEEDE.

Belongs to the flagellar radial spoke RSP4/6 family. In terms of assembly, the radial spoke head is made of five different polypeptides (RSP1, RSP4, RSP6, RSP9, and RSP10). Asymmetrically dimethylated at Arg-267 and Arg-398 during flagellum resorption. Probably methylated by PRMT1.

It localises to the cytoplasm. The protein localises to the cytoskeleton. It is found in the flagellum axoneme. Its function is as follows. Flagellar radial spokes contribute to the regulation of dynein arm activity and thus the pattern of flagellar bending. They consist of a thin stalk, which is attached to the a subfiber of the outer doublet microtubule, and a bulbous head, which is attached to the stalk and appears to interact with the projections from the central pair of microtubules. The polypeptide is Flagellar radial spoke protein 6 (RSP6) (Chlamydomonas reinhardtii (Chlamydomonas smithii)).